The sequence spans 281 residues: Bifunctional protein FolD (281 aa).

163 to 165 (GRS) serves as a coordination point for NADP(+).

It belongs to the tetrahydrofolate dehydrogenase/cyclohydrolase family. As to quaternary structure, homodimer.

It catalyses the reaction (6R)-5,10-methylene-5,6,7,8-tetrahydrofolate + NADP(+) = (6R)-5,10-methenyltetrahydrofolate + NADPH. The catalysed reaction is (6R)-5,10-methenyltetrahydrofolate + H2O = (6R)-10-formyltetrahydrofolate + H(+). It functions in the pathway one-carbon metabolism; tetrahydrofolate interconversion. Functionally, catalyzes the oxidation of 5,10-methylenetetrahydrofolate to 5,10-methenyltetrahydrofolate and then the hydrolysis of 5,10-methenyltetrahydrofolate to 10-formyltetrahydrofolate. The sequence is that of Bifunctional protein FolD from Leuconostoc mesenteroides subsp. mesenteroides (strain ATCC 8293 / DSM 20343 / BCRC 11652 / CCM 1803 / JCM 6124 / NCDO 523 / NBRC 100496 / NCIMB 8023 / NCTC 12954 / NRRL B-1118 / 37Y).